Reading from the N-terminus, the 357-residue chain is Protein-glutamate methylesterase/protein-glutamine glutaminase (357 aa).

Residues 3–120 form the Response regulatory domain; sequence RVIVVDDSAF…LASMDLAALS (118 aa). Asp-54 carries the post-translational modification 4-aspartylphosphate. In terms of domain architecture, CheB-type methylesterase spans 165-357; that stretch reads ERSRRDIIAI…AERVASALYK (193 aa). Active-site residues include Ser-177, His-204, and Asp-300.

This sequence belongs to the CheB family. In terms of processing, phosphorylated by CheA. Phosphorylation of the N-terminal regulatory domain activates the methylesterase activity.

The protein localises to the cytoplasm. The enzyme catalyses [protein]-L-glutamate 5-O-methyl ester + H2O = L-glutamyl-[protein] + methanol + H(+). It catalyses the reaction L-glutaminyl-[protein] + H2O = L-glutamyl-[protein] + NH4(+). Involved in chemotaxis. Part of a chemotaxis signal transduction system that modulates chemotaxis in response to various stimuli. Catalyzes the demethylation of specific methylglutamate residues introduced into the chemoreceptors (methyl-accepting chemotaxis proteins or MCP) by CheR. Also mediates the irreversible deamidation of specific glutamine residues to glutamic acid. The protein is Protein-glutamate methylesterase/protein-glutamine glutaminase of Lawsonia intracellularis (strain PHE/MN1-00).